Reading from the N-terminus, the 121-residue chain is UPF0102 protein DehaBAV1_0707 (121 aa).

This sequence belongs to the UPF0102 family.

This is UPF0102 protein DehaBAV1_0707 from Dehalococcoides mccartyi (strain ATCC BAA-2100 / JCM 16839 / KCTC 5957 / BAV1).